The chain runs to 291 residues: Phosphatidylglycerol--prolipoprotein diacylglyceryl transferase (291 aa).

4 consecutive transmembrane segments (helical) span residues 24–44 (WYALAYIGGIMLGWLYARALL), 64–84 (FILWVTIAIIVGGRVGYVLFY), 100–120 (WNGGMSFHGGFMGCVAAVILF), and 125–145 (GLPILSLGDVATAVGPIGLFL). Position 147 (Arg-147) interacts with a 1,2-diacyl-sn-glycero-3-phospho-(1'-sn-glycerol). 3 helical membrane-spanning segments follow: residues 187–207 (AALEGILLFTILALMIRLGAL), 211–231 (GLVLGSFIALYAMARIVAEFF), and 247–267 (MGMLLSIPMVIIGLAIVYAAW).

Belongs to the Lgt family.

It is found in the cell inner membrane. It catalyses the reaction L-cysteinyl-[prolipoprotein] + a 1,2-diacyl-sn-glycero-3-phospho-(1'-sn-glycerol) = an S-1,2-diacyl-sn-glyceryl-L-cysteinyl-[prolipoprotein] + sn-glycerol 1-phosphate + H(+). Its pathway is protein modification; lipoprotein biosynthesis (diacylglyceryl transfer). Catalyzes the transfer of the diacylglyceryl group from phosphatidylglycerol to the sulfhydryl group of the N-terminal cysteine of a prolipoprotein, the first step in the formation of mature lipoproteins. This chain is Phosphatidylglycerol--prolipoprotein diacylglyceryl transferase, found in Nitrobacter winogradskyi (strain ATCC 25391 / DSM 10237 / CIP 104748 / NCIMB 11846 / Nb-255).